A 270-amino-acid polypeptide reads, in one-letter code: Elongation factor Tu (270 aa).

One can recognise a tr-type G domain in the interval 1–103 (GILVVSAADG…AVDDYIPTPE (103 aa)). 35-38 (NKVD) is a binding site for GTP.

Belongs to the TRAFAC class translation factor GTPase superfamily. Classic translation factor GTPase family. EF-Tu/EF-1A subfamily. In terms of assembly, monomer.

It localises to the cytoplasm. The enzyme catalyses GTP + H2O = GDP + phosphate + H(+). In terms of biological role, GTP hydrolase that promotes the GTP-dependent binding of aminoacyl-tRNA to the A-site of ribosomes during protein biosynthesis. The sequence is that of Elongation factor Tu (tuf) from Staphylococcus warneri.